A 203-amino-acid chain; its full sequence is Small ribosomal subunit protein uS4 (203 aa).

The S4 RNA-binding domain maps to 93-156; the sequence is RRLDNVVYRL…MKVPAILEAV (64 aa).

It belongs to the universal ribosomal protein uS4 family. In terms of assembly, part of the 30S ribosomal subunit. Contacts protein S5. The interaction surface between S4 and S5 is involved in control of translational fidelity.

Its function is as follows. One of the primary rRNA binding proteins, it binds directly to 16S rRNA where it nucleates assembly of the body of the 30S subunit. Functionally, with S5 and S12 plays an important role in translational accuracy. The chain is Small ribosomal subunit protein uS4 from Streptococcus equi subsp. equi (strain 4047).